A 237-amino-acid polypeptide reads, in one-letter code: Golgi anti-apoptotic protein (237 aa).

Topologically, residues 1-37 are cytoplasmic; it reads MAMPSLSACSSIEDDFNYGSSVASASVHIRMAFLRKV. The helical transmembrane segment at 38 to 58 threads the bilayer; that stretch reads YGILCLQFLLTTATTAVFLYF. At 59–67 the chain is on the lumenal side; sequence DCMRTFIQG. A helical membrane pass occupies residues 68 to 88; the sequence is SPVLILASMFGSIGLIFALTL. Over 89–94 the chain is Cytoplasmic; sequence HRHKHP. A helical transmembrane segment spans residues 95–115; the sequence is LNLYLLCGFTLSESLTLASVV. Position 116 (threonine 116) is a topological domain, lumenal. Residues 117–137 traverse the membrane as a helical segment; the sequence is FYDVHVVMQAFMLTTAAFLAL. Over 138–151 the chain is Cytoplasmic; it reads TTYTLQSKRDFSKL. A helical transmembrane segment spans residues 152–172; sequence GAGLFAALWILILSGLLGIFV. Residues 173 to 174 are Lumenal-facing; that stretch reads QN. The helical transmembrane segment at 175–195 threads the bilayer; sequence ETVKLVLSAFGALVFCGFIIY. Residues 196–209 are Cytoplasmic-facing; it reads DTHSLIHKLSPEEY. The helical intramembrane region spans 210-230; sequence VLASINLYLDIINLFLHLLQL. Residues 231 to 237 lie on the Cytoplasmic side of the membrane; sequence LEVSNKK.

Belongs to the BI1 family. LFG subfamily.

The protein resides in the host Golgi apparatus membrane. May affect virulence through inhibition of apoptosis. The polypeptide is Golgi anti-apoptotic protein (L6) (Vaccinia virus (strain LC16m0) (VACV)).